The sequence spans 297 residues: HTH-type transcriptional regulator ArgP (297 aa).

The HTH lysR-type domain maps to 4–60 (PDYRTLQALDAVIRERGFERAAQKLCITQSAVSQRIKQLENTFGQPLLVRTVPPRPT). Positions 21 to 40 (FERAAQKLCITQSAVSQRIK) form a DNA-binding region, H-T-H motif.

This sequence belongs to the LysR transcriptional regulatory family. As to quaternary structure, homodimer.

In terms of biological role, controls the transcription of genes involved in arginine and lysine metabolism. This is HTH-type transcriptional regulator ArgP from Cronobacter sakazakii (strain ATCC BAA-894) (Enterobacter sakazakii).